Reading from the N-terminus, the 524-residue chain is PiggyBac transposable element-derived protein 5 (524 aa).

The disordered stretch occupies residues 30–117 (DDVFGESGPD…DTGGPTRKMP (88 aa)). Low complexity predominate over residues 47–59 (STSAASRSSSAAS). A compositionally biased stretch (pro residues) spans 67-79 (PGPPGAAPPPPRA). Basic and acidic residues predominate over residues 98 to 108 (LRDRPPPRFED). S521 is subject to Phosphoserine.

It localises to the nucleus. Functionally, transposase that mediates sequence-specific genomic rearrangements. Can induce genomic rearrangements that inactivate the HPRT1 gene. The sequence is that of PiggyBac transposable element-derived protein 5 (PGBD5) from Homo sapiens (Human).